The chain runs to 3546 residues: Ubiquitin carboxyl-terminal hydrolase 34 (3546 aa).

Serine 352, serine 486, serine 487, and serine 490 each carry phosphoserine. 3 disordered regions span residues 502-535, 550-679, and 1459-1478; these read KEEE…SGGS, VQQR…VFNT, and TGSY…DQVE. Residues 511 to 524 are compositionally biased toward low complexity; it reads APSPWSPAASPQSS. 2 stretches are compositionally biased toward polar residues: residues 525–534 and 560–570; these read DNSDTHQSGG and SMQGSSDETAN. Low complexity predominate over residues 571-590; sequence SGEDGSSGPGSSSGHSDGSS. The segment covering 591–609 has biased composition (polar residues); the sequence is NEVNSSHASQSAGSPGSEV. A compositionally biased stretch (acidic residues) spans 610–627; sequence QSEDIADIEALKEEDEDD. Serine 649 carries the phosphoserine modification. The span at 659–671 shows a compositional bias: polar residues; it reads QGMSERNGTSSGT. Positions 1467–1477 are enriched in acidic residues; it reads PDSDDSSEDQV. Residue serine 1469 is modified to Phosphoserine. The 346-residue stretch at 1894–2239 folds into the USP domain; it reads VGLTNLGATC…SAYMLFYKRM (346 aa). Cysteine 1903 serves as the catalytic Nucleophile. Histidine 2164 functions as the Proton acceptor in the catalytic mechanism. At serine 2488 the chain carries Phosphoserine. The segment at 3331–3443 is disordered; it reads NSLQEQEAKE…HAEEQSNNGR (113 aa). The span at 3336 to 3347 shows a compositional bias: basic and acidic residues; that stretch reads QEAKERKTKDDE. 2 positions are modified to phosphoserine: serine 3358 and serine 3359. At threonine 3381 the chain carries Phosphothreonine. Phosphoserine occurs at positions 3386 and 3406. The span at 3421–3432 shows a compositional bias: polar residues; the sequence is SSFSEDMSNIRS. Basic and acidic residues predominate over residues 3433–3443; that stretch reads QHAEEQSNNGR. At serine 3503 the chain carries Phosphoserine.

It belongs to the peptidase C19 family. In terms of assembly, interacts with AXIN1 and AXIN2. In terms of tissue distribution, expressed in brain at low level.

It catalyses the reaction Thiol-dependent hydrolysis of ester, thioester, amide, peptide and isopeptide bonds formed by the C-terminal Gly of ubiquitin (a 76-residue protein attached to proteins as an intracellular targeting signal).. Functionally, ubiquitin hydrolase that can remove conjugated ubiquitin from AXIN1 and AXIN2, thereby acting as a regulator of Wnt signaling pathway. Acts as an activator of the Wnt signaling pathway downstream of the beta-catenin destruction complex by deubiquitinating and stabilizing AXIN1 and AXIN2, leading to promote nuclear accumulation of AXIN1 and AXIN2 and positively regulate beta-catenin (CTNBB1)-mediated transcription. Recognizes and hydrolyzes the peptide bond at the C-terminal Gly of ubiquitin. Involved in the processing of poly-ubiquitin precursors as well as that of ubiquitinated proteins. This chain is Ubiquitin carboxyl-terminal hydrolase 34 (USP34), found in Homo sapiens (Human).